A 692-amino-acid chain; its full sequence is Formate hydrogenlyase transcriptional activator FhlA (692 aa).

Residues 202 to 344 (DMDELVSEVA…QIAERVAIAV (143 aa)) form the GAF domain. The Sigma-54 factor interaction domain occupies 381-610 (IIGRSEAMYS…LENVIERAVL (230 aa)). ATP-binding positions include 409 to 416 (GETGTGKE) and 472 to 481 (ADKSSLFLDE). Residues 663–682 (PKGAAQRLGLKRTTLLSRMK) constitute a DNA-binding region (H-T-H motif).

In terms of biological role, required for induction of expression of the formate dehydrogenase H and hydrogenase-3 structural genes. Also activates expression of hyf operon (encodes the silent hydrogenase-4 gene cluster). The sequence is that of Formate hydrogenlyase transcriptional activator FhlA (fhlA) from Escherichia coli (strain K12).